The chain runs to 100 residues: Large ribosomal subunit protein eL30 (100 aa).

It belongs to the eukaryotic ribosomal protein eL30 family.

This is Large ribosomal subunit protein eL30 from Methanococcus maripaludis (strain DSM 14266 / JCM 13030 / NBRC 101832 / S2 / LL).